The chain runs to 80 residues: U-actitoxin-Avd9a (80 aa).

The N-terminal stretch at 1–20 (MNLKVLAVFVLCAILVVVTA) is a signal peptide. The propeptide occupies 21–39 (ERRGTETGVYKKDTLQDLI). The region spanning 45–80 (CIDRFPTGTCKQVKKGGSCKNSDKYRMNCRKTCGLC) is the ShKT domain. Cystine bridges form between Cys-45–Cys-80, Cys-54–Cys-73, and Cys-63–Cys-77. Residues 68–69 (KY) form a crucial for binding to potassium channels region.

This sequence belongs to the sea anemone type 1 potassium channel toxin family. Type 1b subfamily.

It localises to the secreted. Its subcellular location is the nematocyst. Functionally, inhibits voltage-gated potassium channels (Kv1/KCNA). This Anemonia viridis (Snakelocks anemone) protein is U-actitoxin-Avd9a.